The primary structure comprises 209 residues: Peroxynitrite isomerase 2 (209 aa).

Residues 56–62 carry the GXWXGXG motif; sequence GVWRGEG. Residues lysine 172 and histidine 199 each coordinate heme b.

Belongs to the nitrobindin family. In terms of assembly, homodimer. Heme b serves as cofactor.

The enzyme catalyses peroxynitrite = nitrate. It participates in nitrogen metabolism. Functionally, heme-binding protein able to scavenge peroxynitrite and to protect free L-tyrosine against peroxynitrite-mediated nitration, by acting as a peroxynitrite isomerase that converts peroxynitrite to nitrate. Therefore, this protein likely plays a role in peroxynitrite sensing and in the detoxification of reactive nitrogen and oxygen species (RNS and ROS, respectively). Is able to bind nitric oxide (NO) in vitro, but may act as a sensor of peroxynitrite levels in vivo. This Mycolicibacterium gilvum (strain PYR-GCK) (Mycobacterium gilvum (strain PYR-GCK)) protein is Peroxynitrite isomerase 2.